A 607-amino-acid polypeptide reads, in one-letter code: MKRTHYCNDVRESQIGETVVLEGWINRRRDHGGVIFVDLRDRTGLVQVVFSPELFAEPHAQAHTLRSEYVIRATGKVTARSEGTINPNMDTGRIEVVVEDLTILNSSLPLPFQLDDEISENLRLQYRFLDLRRPDMQRNLMFRHRIMQSVRKHLDGSGFVEVETPMLTRSTPEGARDYLVPSRVNPGDFYALPQSPQLFKQLLMMAGYDRYFQIVRCFRDEDLRADRQPEFTQIDLEMSFVEPNDVMELTESVVVEAFKEALGVSIPQPVRRITYAEAMDKYGLDAPDMRITMELKDLTEVMKSSEFKVFRQAATLEGRGNEHGLVKVLKVPGGGSLTRKQIDTYTEFVGIYGAKGLAYIKVNGPWQEDGWQSPIVKFLGDAEKQAIQEATQAQVGDLLFFGADKASVVNESLGRLRVKLGKELEMLCDEKFAFVWVTDFPLLDWDNEARRNTAVHHPFTAPHPDDIIYLENADGASVEHPLEKVRSLAYDLVLNGTEVGGGSIRIHDTMLQRRMLELLEIGEEEAEGKFGFLLRALQYGAPPHGGLALGLDRLVTLMLGLDSIRDVIAFPKTQKATCLMTEAPSKVDGAQLKELHLRSTFKPKTAE.

Position 173 (glutamate 173) interacts with L-aspartate. An aspartate region spans residues 197–200 (QLFK). An L-aspartate-binding site is contributed by arginine 219. Residues 219-221 (RDE) and glutamine 228 contribute to the ATP site. Position 456 (histidine 456) interacts with L-aspartate. ATP is bound at residue glutamate 498. L-aspartate is bound at residue arginine 505. An ATP-binding site is contributed by 550–553 (GLDR).

This sequence belongs to the class-II aminoacyl-tRNA synthetase family. Type 1 subfamily. In terms of assembly, homodimer.

The protein resides in the cytoplasm. The enzyme catalyses tRNA(Asx) + L-aspartate + ATP = L-aspartyl-tRNA(Asx) + AMP + diphosphate. In terms of biological role, aspartyl-tRNA synthetase with relaxed tRNA specificity since it is able to aspartylate not only its cognate tRNA(Asp) but also tRNA(Asn). Reaction proceeds in two steps: L-aspartate is first activated by ATP to form Asp-AMP and then transferred to the acceptor end of tRNA(Asp/Asn). This Magnetococcus marinus (strain ATCC BAA-1437 / JCM 17883 / MC-1) protein is Aspartate--tRNA(Asp/Asn) ligase.